A 145-amino-acid polypeptide reads, in one-letter code: Large ribosomal subunit protein uL15 (145 aa).

Residues 1–13 (MNLHELKYNEGAR) are compositionally biased toward basic and acidic residues. The segment at 1–56 (MNLHELKYNEGARKEKHRVGRGHAAGKGKQAGKGQSGQLKRTGSKPGFEGGQNPWY) is disordered. The span at 14-26 (KEKHRVGRGHAAG) shows a compositional bias: basic residues.

The protein belongs to the universal ribosomal protein uL15 family. Part of the 50S ribosomal subunit.

Functionally, binds to the 23S rRNA. This chain is Large ribosomal subunit protein uL15, found in Mycoplasma mobile (strain ATCC 43663 / 163K / NCTC 11711) (Mesomycoplasma mobile).